The following is a 117-amino-acid chain: MDKKASRIRRATRARRKIAELGATRLVVHRTPRHVYAQVIASNGSEVIAAASTVEKAIREQVKNTGNVDAAKAVGKAIAERALEKGVETVAFDRSGFQYHGRVAALAESAREAGLKF.

It belongs to the universal ribosomal protein uL18 family. Part of the 50S ribosomal subunit; part of the 5S rRNA/L5/L18/L25 subcomplex. Contacts the 5S and 23S rRNAs.

In terms of biological role, this is one of the proteins that bind and probably mediate the attachment of the 5S RNA into the large ribosomal subunit, where it forms part of the central protuberance. The sequence is that of Large ribosomal subunit protein uL18 from Vibrio proteolyticus (Aeromonas proteolytica).